A 187-amino-acid chain; its full sequence is Pyridoxal 5'-phosphate synthase subunit PdxT (187 aa).

An L-glutamine-binding site is contributed by 47 to 49 (GES). The active-site Nucleophile is cysteine 76. Residues arginine 102 and 128 to 129 (IR) contribute to the L-glutamine site. Residues histidine 165 and glutamate 167 each act as charge relay system in the active site.

This sequence belongs to the glutaminase PdxT/SNO family. As to quaternary structure, in the presence of PdxS, forms a dodecamer of heterodimers. Only shows activity in the heterodimer.

The enzyme catalyses aldehydo-D-ribose 5-phosphate + D-glyceraldehyde 3-phosphate + L-glutamine = pyridoxal 5'-phosphate + L-glutamate + phosphate + 3 H2O + H(+). The catalysed reaction is L-glutamine + H2O = L-glutamate + NH4(+). It functions in the pathway cofactor biosynthesis; pyridoxal 5'-phosphate biosynthesis. Catalyzes the hydrolysis of glutamine to glutamate and ammonia as part of the biosynthesis of pyridoxal 5'-phosphate. The resulting ammonia molecule is channeled to the active site of PdxS. The protein is Pyridoxal 5'-phosphate synthase subunit PdxT of Methanococcus maripaludis (strain DSM 14266 / JCM 13030 / NBRC 101832 / S2 / LL).